The primary structure comprises 388 residues: Carbamoyl phosphate synthase small chain (388 aa).

Positions 1–198 (MSQDLLPGVT…WPEGYAKLDK (198 aa)) are CPSase. The L-glutamine site is built by Ser53, Gly250, and Gly252. Residues 202–388 (EVVVIDYGVK…RFAGLMDAAK (187 aa)) enclose the Glutamine amidotransferase type-1 domain. The active-site Nucleophile is Cys279. Leu280, Gln283, Asn321, Gly323, and Phe324 together coordinate L-glutamine. Catalysis depends on residues His363 and Glu365.

Belongs to the CarA family. In terms of assembly, composed of two chains; the small (or glutamine) chain promotes the hydrolysis of glutamine to ammonia, which is used by the large (or ammonia) chain to synthesize carbamoyl phosphate. Tetramer of heterodimers (alpha,beta)4.

The catalysed reaction is hydrogencarbonate + L-glutamine + 2 ATP + H2O = carbamoyl phosphate + L-glutamate + 2 ADP + phosphate + 2 H(+). The enzyme catalyses L-glutamine + H2O = L-glutamate + NH4(+). It functions in the pathway amino-acid biosynthesis; L-arginine biosynthesis; carbamoyl phosphate from bicarbonate: step 1/1. It participates in pyrimidine metabolism; UMP biosynthesis via de novo pathway; (S)-dihydroorotate from bicarbonate: step 1/3. Its function is as follows. Small subunit of the glutamine-dependent carbamoyl phosphate synthetase (CPSase). CPSase catalyzes the formation of carbamoyl phosphate from the ammonia moiety of glutamine, carbonate, and phosphate donated by ATP, constituting the first step of 2 biosynthetic pathways, one leading to arginine and/or urea and the other to pyrimidine nucleotides. The small subunit (glutamine amidotransferase) binds and cleaves glutamine to supply the large subunit with the substrate ammonia. This Caulobacter vibrioides (strain ATCC 19089 / CIP 103742 / CB 15) (Caulobacter crescentus) protein is Carbamoyl phosphate synthase small chain.